The following is a 72-amino-acid chain: Large ribosomal subunit protein bL31c (72 aa).

Belongs to the bacterial ribosomal protein bL31 family. Type A subfamily. Part of the 50S ribosomal subunit.

It is found in the plastid. The protein localises to the chloroplast. Its function is as follows. Binds the 23S rRNA. This is Large ribosomal subunit protein bL31c from Guillardia theta (Cryptophyte).